We begin with the raw amino-acid sequence, 245 residues long: 8-amino-3,8-dideoxy-manno-octulosonate cytidylyltransferase (245 aa).

It belongs to the KdsB family.

The protein resides in the cytoplasm. The catalysed reaction is 8-amino-3,8-dideoxy-alpha-D-manno-octulosonate + CTP = CMP-8-amino-3,8-dideoxy-alpha-D-manno-oct-2-ulosonate + diphosphate. Its pathway is bacterial outer membrane biogenesis; lipopolysaccharide biosynthesis. Functionally, activates KDO8N (a required 8-carbon sugar) for incorporation into bacterial lipopolysaccharide in the Shewanella genus. The protein is 8-amino-3,8-dideoxy-manno-octulosonate cytidylyltransferase of Shewanella baltica (strain OS185).